A 556-amino-acid polypeptide reads, in one-letter code: Arginine--tRNA ligase (556 aa).

Positions 132 to 142 (ANPTGDLHLGH) match the 'HIGH' region motif.

Belongs to the class-I aminoacyl-tRNA synthetase family. As to quaternary structure, monomer.

It localises to the cytoplasm. It carries out the reaction tRNA(Arg) + L-arginine + ATP = L-arginyl-tRNA(Arg) + AMP + diphosphate. In Bacillus subtilis (strain 168), this protein is Arginine--tRNA ligase (argS).